The sequence spans 374 residues: Diels-Alderase fsa2 (374 aa).

The tract at residues 1 to 216 is beta-sandwich motif; sequence MSNVTVSAFT…MDRVWSPLSW (216 aa). Residues 216–374 are beta-barrel motif; that stretch reads WPQVMTESYY…VGTGGQCELS (159 aa).

Belongs to the Diels-Alderase family.

The enzyme catalyses (5S)-3-[(2E,6R,8E,10E,12E)-2,6-dimethyltetradeca-2,8,10,12-tetraenoyl]-5-(hydroxymethyl)pyrrolidine-2,4-dione = trichosetin. Its pathway is mycotoxin biosynthesis. Functionally, diels-Alderase; part of the gene cluster that mediates the biosynthesis of the HIV-1 integrase inhibitor equisetin and of fusarisetin A, both trans-fused decalin-containing tetramic acids showing also antimicrobial activity. The PKS module of fsa1 together with the enoylreductase fsa3 catalyze the formation of the polyketide unit which is then conjugated to L-serine by the condensation domain of the fsa1 NRPS module. Activity of the Dieckmann cyclase domain (RED) results in release of the Dieckmann product intermediate. Diels-Alderase fsa2 is involved in endo-selective Diels-Alder cycloaddition to form the decalin ring, leading to the production of N-desmethylequisetin also called trichosetin. Subsequent N-methylation is carried out by fsa4 to give equisetin. The enzymatic gene responsible for the conversion of equisetin to fusarisetin A has not been identified yet and is probably located outside of the fsa cluster. In Fusarium sp. (strain FN080326), this protein is Diels-Alderase fsa2.